Reading from the N-terminus, the 543-residue chain is Glucose-6-phosphate isomerase (543 aa).

Glu353 acts as the Proton donor in catalysis. Catalysis depends on residues His384 and Lys504.

The protein belongs to the GPI family.

The protein resides in the cytoplasm. The catalysed reaction is alpha-D-glucose 6-phosphate = beta-D-fructose 6-phosphate. It participates in carbohydrate biosynthesis; gluconeogenesis. The protein operates within carbohydrate degradation; glycolysis; D-glyceraldehyde 3-phosphate and glycerone phosphate from D-glucose: step 2/4. In terms of biological role, catalyzes the reversible isomerization of glucose-6-phosphate to fructose-6-phosphate. The protein is Glucose-6-phosphate isomerase of Roseiflexus castenholzii (strain DSM 13941 / HLO8).